A 283-amino-acid polypeptide reads, in one-letter code: MKVISSIQELRDQLRGQNRVAFVPTMGNLHEGHLSLMRLARQHGDPVVASIFVNRLQFGPNEDFDKYPRTLQDDIEKLQKEGVYVLFAPTERDMYPEPQEYRVEPPHDLGDTLEGEFRPGFFKGVCTVVMKLFCCVQPRVAVFGKKDYQQLMIVRRMAHQFALPVDIVPAETVRADDGLALSSRNVYLTNEERAEAPELYRTLHQVRQDVLETVLQGQASHEEVTTKAMDYLRGRGWQPDYVAVRRRSDLQKPTPENIAAGEPLVVLTAAKLGKTRLIDNLEI.

26–33 (MGNLHEGH) contacts ATP. The active-site Proton donor is the His33. Position 57 (Gln57) interacts with (R)-pantoate. Gln57 is a beta-alanine binding site. 144 to 147 (GKKD) is an ATP binding site. Residue Gln150 participates in (R)-pantoate binding. Residues Val173 and 181–184 (LSSR) each bind ATP.

The protein belongs to the pantothenate synthetase family. As to quaternary structure, homodimer.

It localises to the cytoplasm. It carries out the reaction (R)-pantoate + beta-alanine + ATP = (R)-pantothenate + AMP + diphosphate + H(+). Its pathway is cofactor biosynthesis; (R)-pantothenate biosynthesis; (R)-pantothenate from (R)-pantoate and beta-alanine: step 1/1. Its function is as follows. Catalyzes the condensation of pantoate with beta-alanine in an ATP-dependent reaction via a pantoyl-adenylate intermediate. The sequence is that of Pantothenate synthetase from Ralstonia pickettii (strain 12J).